Consider the following 550-residue polypeptide: Formate--tetrahydrofolate ligase (550 aa).

60-67 (TPFGEGKT) is a binding site for ATP.

It belongs to the formate--tetrahydrofolate ligase family.

It catalyses the reaction (6S)-5,6,7,8-tetrahydrofolate + formate + ATP = (6R)-10-formyltetrahydrofolate + ADP + phosphate. The protein operates within one-carbon metabolism; tetrahydrofolate interconversion. This chain is Formate--tetrahydrofolate ligase, found in Campylobacter curvus (strain 525.92).